Consider the following 398-residue polypeptide: Acetate kinase (398 aa).

Mg(2+) is bound at residue Asn8. An ATP-binding site is contributed by Lys15. Arg89 serves as a coordination point for substrate. The active-site Proton donor/acceptor is Asp146. ATP contacts are provided by residues 206 to 210, 283 to 285, and 331 to 335; these read HIGNG, DMR, and GMGEN. Residue Glu383 coordinates Mg(2+).

The protein belongs to the acetokinase family. Homodimer. The cofactor is Mg(2+). Mn(2+) is required as a cofactor.

It is found in the cytoplasm. It carries out the reaction acetate + ATP = acetyl phosphate + ADP. The protein operates within metabolic intermediate biosynthesis; acetyl-CoA biosynthesis; acetyl-CoA from acetate: step 1/2. Its function is as follows. Catalyzes the formation of acetyl phosphate from acetate and ATP. Can also catalyze the reverse reaction. The polypeptide is Acetate kinase (Streptococcus pyogenes serotype M4 (strain MGAS10750)).